The chain runs to 880 residues: Tyrosine-protein kinase receptor TYRO3 (880 aa).

The first 28 residues, 1–28, serve as a signal peptide directing secretion; the sequence is MVYPGPPGLIAGLLLAALSLSCVDGAKA. Ig-like C2-type domains lie at 29 to 114 and 125 to 206; these read LGFV…KSVS and PYFT…AIVE. Over 29–414 the chain is Extracellular; sequence LGFVGHGYNL…QRHPHTRMSW (386 aa). Residues Asn-37 and Asn-49 are each glycosylated (N-linked (GlcNAc...) asparagine). Cys-50 and Cys-103 form a disulfide bridge. N-linked (GlcNAc...) asparagine glycosylation occurs at Asn-143. An intrachain disulfide couples Cys-146 to Cys-189. Fibronectin type-III domains are found at residues 213 to 306 and 311 to 401; these read PPFN…TKET and LPQN…SKEE. Residues Asn-216, Asn-279, Asn-351, and Asn-365 are each glycosylated (N-linked (GlcNAc...) asparagine). A helical membrane pass occupies residues 415–435; sequence VPMVLGILTALVTVVAMTLIF. Residues 436-880 are Cytoplasmic-facing; the sequence is LRKGRKETRF…MQEEQVVITL (445 aa). The Protein kinase domain maps to 503-774; that stretch reads FTLGRTLGKG…VDLKQRLEAI (272 aa). ATP-binding positions include 509 to 517 and Lys-535; that span reads LGKGEFGSV. Catalysis depends on Asp-640, which acts as the Proton acceptor. Tyr-671 bears the Phosphotyrosine; by autocatalysis mark. The disordered stretch occupies residues 846–880; sequence EWSSSAQNGEARGLLHEEEEEEEEEMQEEQVVITL. A compositionally biased stretch (acidic residues) spans 862–873; the sequence is EEEEEEEEEMQE.

Belongs to the protein kinase superfamily. Tyr protein kinase family. AXL/UFO subfamily. Post-translationally, tyrosine phosphorylated upon receptor stimulation. Detected in brain, spinal cord, intestine, lung, stomach, ovary, testis, skin and eye.

It localises to the cell membrane. The enzyme catalyses L-tyrosyl-[protein] + ATP = O-phospho-L-tyrosyl-[protein] + ADP + H(+). May be involved in cell adhesion processes, particularly in the central nervous system. The chain is Tyrosine-protein kinase receptor TYRO3 (tyro3) from Xenopus laevis (African clawed frog).